A 74-amino-acid chain; its full sequence is Large ribosomal subunit protein bL31 (74 aa).

Zn(2+) is bound by residues C16, C18, C37, and C40.

This sequence belongs to the bacterial ribosomal protein bL31 family. Type A subfamily. In terms of assembly, part of the 50S ribosomal subunit. Zn(2+) is required as a cofactor.

Its function is as follows. Binds the 23S rRNA. The sequence is that of Large ribosomal subunit protein bL31 from Koribacter versatilis (strain Ellin345).